A 64-amino-acid polypeptide reads, in one-letter code: Conotoxin Leo-T1 (64 aa).

Residues 1–22 (MRCLPVFIILLLLIPSAPSVDA) form the signal peptide. Residues 23-48 (QPKTEDDVPLASLHDNAKLTLQGLWD) constitute a propeptide that is removed on maturation.

It belongs to the conotoxin T superfamily. In terms of processing, contains 2 disulfide bonds that can be either 'C1-C3, C2-C4' or 'C1-C4, C2-C3', since these disulfide connectivities have been observed for conotoxins with cysteine framework V (for examples, see AC P0DQQ7 and AC P81755). In terms of tissue distribution, expressed by the venom duct.

The protein localises to the secreted. The polypeptide is Conotoxin Leo-T1 (Conus leopardus (Leopard cone)).